The sequence spans 217 residues: tRNA (guanine-N(7)-)-methyltransferase (217 aa).

The S-adenosyl-L-methionine site is built by E48, E73, N100, and D123. The active site involves D123. Substrate contacts are provided by K127 and D159.

Belongs to the class I-like SAM-binding methyltransferase superfamily. TrmB family.

It carries out the reaction guanosine(46) in tRNA + S-adenosyl-L-methionine = N(7)-methylguanosine(46) in tRNA + S-adenosyl-L-homocysteine. It participates in tRNA modification; N(7)-methylguanine-tRNA biosynthesis. In terms of biological role, catalyzes the formation of N(7)-methylguanine at position 46 (m7G46) in tRNA. The polypeptide is tRNA (guanine-N(7)-)-methyltransferase (Leptospira interrogans serogroup Icterohaemorrhagiae serovar Lai (strain 56601)).